The chain runs to 685 residues: Methionine--tRNA ligase (685 aa).

A 'HIGH' region motif is present at residues 12-22; sequence PYANGSIHLGH. Zn(2+)-binding residues include Cys143, Cys146, Cys156, and Cys159. The short motif at 339–343 is the 'KMSKS' region element; it reads KMSKS. Residue Lys342 participates in ATP binding. Residues 582–685 enclose the tRNA-binding domain; it reads DFMKIDMRVA…AGAQPGDKVG (104 aa).

The protein belongs to the class-I aminoacyl-tRNA synthetase family. MetG type 1 subfamily. In terms of assembly, homodimer. The cofactor is Zn(2+).

It localises to the cytoplasm. The enzyme catalyses tRNA(Met) + L-methionine + ATP = L-methionyl-tRNA(Met) + AMP + diphosphate. Functionally, is required not only for elongation of protein synthesis but also for the initiation of all mRNA translation through initiator tRNA(fMet) aminoacylation. In Neisseria meningitidis serogroup C (strain 053442), this protein is Methionine--tRNA ligase.